The chain runs to 307 residues: Ribonuclease Z (307 aa).

Positions 63, 65, 67, 68, 143, 213, and 271 each coordinate Zn(2+). The Proton acceptor role is filled by D67.

This sequence belongs to the RNase Z family. In terms of assembly, homodimer. Zn(2+) serves as cofactor.

The enzyme catalyses Endonucleolytic cleavage of RNA, removing extra 3' nucleotides from tRNA precursor, generating 3' termini of tRNAs. A 3'-hydroxy group is left at the tRNA terminus and a 5'-phosphoryl group is left at the trailer molecule.. Its function is as follows. Zinc phosphodiesterase, which displays some tRNA 3'-processing endonuclease activity. Probably involved in tRNA maturation, by removing a 3'-trailer from precursor tRNA. This Lactococcus lactis subsp. cremoris (strain SK11) protein is Ribonuclease Z.